Consider the following 185-residue polypeptide: Adenylyl-sulfate kinase (185 aa).

Gly-13–Thr-20 provides a ligand contact to ATP. Ser-87 (phosphoserine intermediate) is an active-site residue.

The protein belongs to the APS kinase family.

It catalyses the reaction adenosine 5'-phosphosulfate + ATP = 3'-phosphoadenylyl sulfate + ADP + H(+). Its pathway is sulfur metabolism; hydrogen sulfide biosynthesis; sulfite from sulfate: step 2/3. Its function is as follows. Catalyzes the synthesis of activated sulfate. This chain is Adenylyl-sulfate kinase, found in Halothermothrix orenii (strain H 168 / OCM 544 / DSM 9562).